A 72-amino-acid polypeptide reads, in one-letter code: Prokaryotic ubiquitin-like protein Pup (72 aa).

Residues 1–10 show a composition bias toward gly residues; sequence MATRDSGGGQ. The disordered stretch occupies residues 1 to 41; it reads MATRDSGGGQQHTNRHADEVEEVAAEGNDASDLKERHEKLS. The stretch at 21–61 forms a coiled coil; sequence EEVAAEGNDASDLKERHEKLSEDVDSLLDEIDDVLEENAEE. Positions 28-66 are ARC ATPase binding; that stretch reads NDASDLKERHEKLSEDVDSLLDEIDDVLEENAEEFVKGY. A compositionally biased stretch (basic and acidic residues) spans 31–41; the sequence is SDLKERHEKLS. Residue E72 forms an Isoglutamyl lysine isopeptide (Glu-Lys) (interchain with K-? in acceptor proteins) linkage.

This sequence belongs to the prokaryotic ubiquitin-like protein family. Strongly interacts with the proteasome-associated ATPase ARC through a hydrophobic interface; the interacting region of Pup lies in its C-terminal half. There is one Pup binding site per ARC hexamer ring.

It participates in protein degradation; proteasomal Pup-dependent pathway. In terms of biological role, protein modifier that is covalently attached to lysine residues of substrate proteins, thereby targeting them for proteasomal degradation. The tagging system is termed pupylation. In Frankia alni (strain DSM 45986 / CECT 9034 / ACN14a), this protein is Prokaryotic ubiquitin-like protein Pup.